A 1322-amino-acid polypeptide reads, in one-letter code: Centrosome-associated protein Alms1a (1322 aa).

Disordered stretches follow at residues 1-26, 53-135, 165-193, 252-442, 464-614, 657-752, 814-844, 856-911, and 1083-1109; these read MRAK…ESSR, TASS…SEVT, SQSA…SVLK, EEPS…NSVY, KHNQ…GSRP, ESST…ASTD, SKSQ…KERP, AEAE…LNQR, and ASAT…SSMM. Residues 53–62 show a composition bias toward low complexity; sequence TASSGASGST. The span at 78-111 shows a compositional bias: basic and acidic residues; the sequence is MEHESRPESGHRRRTKSSDHRSPDERGEAKEQLR. The segment covering 165-189 has biased composition (polar residues); that stretch reads SQSAEDIRTPTKSPQMQNKKTQTPE. Residues 279–292 show a composition bias toward low complexity; sequence SLNSGMESSLSSNK. Over residues 309–318 the composition is skewed to polar residues; that stretch reads EVSSCQTDCR. The span at 319 to 330 shows a compositional bias: low complexity; sequence SSSQKESTQGSS. Positions 338–350 are enriched in polar residues; the sequence is NFTTEGTQCSYNR. Acidic residues predominate over residues 354–364; sequence EIDSIMEEEES. Composition is skewed to basic and acidic residues over residues 365–375 and 394–408; these read IDRRKKDDLRI and SRRE…DDSR. A compositionally biased stretch (low complexity) spans 409–430; the sequence is LNSPNSSRLGSEVSSRVESSRS. Composition is skewed to basic and acidic residues over residues 464-487, 495-512, and 519-538; these read KHNQ…EQHQ, PKGR…REQQ, and RDQR…EREQ. Low complexity-rich tracts occupy residues 594 to 605 and 657 to 669; these read STGVTASTSTTS and ESST…SSSS. Over residues 678–696 the composition is skewed to polar residues; the sequence is GSLQQVAATNTNQSNARSS. The segment covering 714–735 has biased composition (low complexity); it reads AIGSSSPLPESVSYSGSTSGSG. Composition is skewed to polar residues over residues 737–751 and 822–832; these read VITQ…NAST and TESATAAQIPS. Residues 893 to 907 are compositionally biased toward pro residues; it reads LPAPPPTQPPPPPPH. Residues 1092–1107 show a composition bias toward low complexity; the sequence is SAITRSTTTTTNSSSS. Residues 1115-1322 form an interaction with Klp10A region; that stretch reads MSVPMGMMNT…ISLNHSMAIM (208 aa). The ALMS motif stretch occupies residues 1190–1309; sequence SLQDQLQLAR…FNKRLKSRVA (120 aa).

This sequence belongs to the ALMS1 family. Interacts (via C-terminus) with Klp10A. Interacts with SAK. Expressed in all germlines, including germline stem cells and spermatogonia.

The protein resides in the cytoplasm. Its subcellular location is the cytoskeleton. It localises to the microtubule organizing center. It is found in the centrosome. The protein localises to the centriole. In asymmetrically dividing germline stem cells (GSCs), plays a critical role in ensuring centrosome duplication, which is essential for the production of centrosomes and centrioles in all downstream germ cells. Might recruit SAK for daughter centriole duplication. This chain is Centrosome-associated protein Alms1a, found in Drosophila melanogaster (Fruit fly).